The chain runs to 762 residues: Lysyl oxidase homolog 2B (762 aa).

The signal sequence occupies residues 1-20; the sequence is MLALWSISFVLLCSWRLSYA. SRCR domains are found at residues 53–154, 183–292, 316–417, and 427–536; these read LRLA…VVCS, IRPI…VSCI, VRLR…VKCN, and LRLS…VSCS. Cystine bridges form between cysteine 79–cysteine 143, cysteine 92–cysteine 153, cysteine 123–cysteine 133, cysteine 213–cysteine 281, cysteine 226–cysteine 291, cysteine 260–cysteine 270, cysteine 341–cysteine 406, cysteine 354–cysteine 416, and cysteine 385–cysteine 395. A glycan (N-linked (GlcNAc...) asparagine) is linked at asparagine 278. The N-linked (GlcNAc...) asparagine glycan is linked to asparagine 447. 3 disulfide bridges follow: cysteine 456–cysteine 522, cysteine 469–cysteine 535, and cysteine 503–cysteine 513. Residues 540–742 form a lysyl-oxidase like region; sequence PDLVLNPQVV…WMYNCHIGGS (203 aa). Positions 541 and 542 each coordinate Ca(2+). Intrachain disulfides connect cysteine 565-cysteine 616, cysteine 571-cysteine 686, cysteine 648-cysteine 664, and cysteine 654-cysteine 676. Cu cation is bound by residues histidine 617, histidine 619, and histidine 621. Asparagine 635 carries an N-linked (GlcNAc...) asparagine glycan. The segment at residues 644-680 is a cross-link (lysine tyrosylquinone (Lys-Tyr)); it reads KASFCLEDSECDEGIEKRYECANFGEQGITVGCWDTY. A 2',4',5'-topaquinone modification is found at tyrosine 680. 4 residues coordinate Ca(2+): glutamate 713, aspartate 715, asparagine 718, and asparagine 719. An intrachain disulfide couples cysteine 723 to cysteine 737.

The protein belongs to the lysyl oxidase family. Requires Cu cation as cofactor. Lysine tyrosylquinone residue serves as cofactor. The lysine tyrosylquinone cross-link (LTQ) is generated by condensation of the epsilon-amino group of a lysine with a topaquinone produced by oxidation of tyrosine.

It localises to the secreted. It is found in the extracellular space. The protein resides in the extracellular matrix. Its subcellular location is the basement membrane. The protein localises to the nucleus. It localises to the chromosome. It is found in the endoplasmic reticulum. The enzyme catalyses L-lysyl-[protein] + O2 + H2O = (S)-2-amino-6-oxohexanoyl-[protein] + H2O2 + NH4(+). Mediates the post-translational oxidative deamination of lysine residues on target proteins leading to the formation of deaminated lysine (allysine). Acts as a transcription corepressor and specifically mediates deamination of trimethylated 'Lys-4' of histone H3 (H3K4me3), a specific tag for epigenetic transcriptional activation. Shows no activity against histone H3 when it is trimethylated on 'Lys-9' (H3K9me3) or 'Lys-27' (H3K27me3) or when 'Lys-4' is monomethylated (H3K4me1) or dimethylated (H3K4me2). Also mediates deamination of methylated TAF10, a member of the transcription factor IID (TFIID) complex, which induces release of TAF10 from promoters, leading to inhibition of TFIID-dependent transcription. LOXL2-mediated deamination of TAF10 results in transcriptional repression of genes required for embryonic stem cell pluripotency. Involved in epithelial to mesenchymal transition (EMT) and participates in repression of E-cadherin, probably by mediating deamination of histone H3. When secreted into the extracellular matrix, promotes cross-linking of extracellular matrix proteins by mediating oxidative deamination of peptidyl lysine residues in precursors to fibrous collagen and elastin. Acts as a regulator of sprouting angiogenesis, probably via collagen IV scaffolding. Acts as a regulator of chondrocyte differentiation, probably by regulating expression of factors that control chondrocyte differentiation. Required with loxl2a for correct expression of Sox2 and for neural differentiation. This is Lysyl oxidase homolog 2B (loxl2b) from Danio rerio (Zebrafish).